The primary structure comprises 369 residues: Peptide chain release factor 2 (369 aa).

Gln-249 bears the N5-methylglutamine mark.

This sequence belongs to the prokaryotic/mitochondrial release factor family. Post-translationally, methylated by PrmC. Methylation increases the termination efficiency of RF2.

It is found in the cytoplasm. Functionally, peptide chain release factor 2 directs the termination of translation in response to the peptide chain termination codons UGA and UAA. This Thermosipho africanus (strain TCF52B) protein is Peptide chain release factor 2.